Here is a 173-residue protein sequence, read N- to C-terminus: MAIRRILTVDNAADLATLKKISTPVEAVTDELRALMDDMLETMYDAPGIGLAAVQVGEPVRVIVMDLAREGEDKAPRYFVNPEILASSEDLQGYEEGCLSVPEYYDEVERPSKVTLRYMNYQGETVVEEAEGLFAVCIQHEMDHLEGVLFIDHLSRLRRDRAMAKVKKARRAA.

Residues C98 and H140 each coordinate Fe cation. Residue E141 is part of the active site. Fe cation is bound at residue H144.

The protein belongs to the polypeptide deformylase family. It depends on Fe(2+) as a cofactor.

It catalyses the reaction N-terminal N-formyl-L-methionyl-[peptide] + H2O = N-terminal L-methionyl-[peptide] + formate. In terms of biological role, removes the formyl group from the N-terminal Met of newly synthesized proteins. Requires at least a dipeptide for an efficient rate of reaction. N-terminal L-methionine is a prerequisite for activity but the enzyme has broad specificity at other positions. This Caulobacter vibrioides (strain ATCC 19089 / CIP 103742 / CB 15) (Caulobacter crescentus) protein is Peptide deformylase.